The chain runs to 471 residues: Pachytene checkpoint protein 2 homolog (471 aa).

Residue 213-220 (GPPGTGKT) coordinates ATP.

This sequence belongs to the AAA ATPase family. PCH2 subfamily.

Its function is as follows. Plays a key role in chromosome recombination during meiosis. This Oryza sativa subsp. indica (Rice) protein is Pachytene checkpoint protein 2 homolog.